We begin with the raw amino-acid sequence, 179 residues long: Peptidyl-tRNA hydrolase (179 aa).

A tRNA-binding site is contributed by Tyr-15. The Proton acceptor role is filled by His-20. The tRNA site is built by Tyr-66, Asn-68, and Asn-114.

The protein belongs to the PTH family. Monomer.

The protein resides in the cytoplasm. It carries out the reaction an N-acyl-L-alpha-aminoacyl-tRNA + H2O = an N-acyl-L-amino acid + a tRNA + H(+). Functionally, hydrolyzes ribosome-free peptidyl-tRNAs (with 1 or more amino acids incorporated), which drop off the ribosome during protein synthesis, or as a result of ribosome stalling. Its function is as follows. Catalyzes the release of premature peptidyl moieties from peptidyl-tRNA molecules trapped in stalled 50S ribosomal subunits, and thus maintains levels of free tRNAs and 50S ribosomes. This chain is Peptidyl-tRNA hydrolase, found in Chlamydia muridarum (strain MoPn / Nigg).